A 526-amino-acid chain; its full sequence is Bifunctional purine biosynthesis protein PurH (526 aa).

In terms of domain architecture, MGS-like spans 1–147 (MSSIKRALIS…KNWKHVAIVT (147 aa)).

It belongs to the PurH family.

It carries out the reaction (6R)-10-formyltetrahydrofolate + 5-amino-1-(5-phospho-beta-D-ribosyl)imidazole-4-carboxamide = 5-formamido-1-(5-phospho-D-ribosyl)imidazole-4-carboxamide + (6S)-5,6,7,8-tetrahydrofolate. It catalyses the reaction IMP + H2O = 5-formamido-1-(5-phospho-D-ribosyl)imidazole-4-carboxamide. It functions in the pathway purine metabolism; IMP biosynthesis via de novo pathway; 5-formamido-1-(5-phospho-D-ribosyl)imidazole-4-carboxamide from 5-amino-1-(5-phospho-D-ribosyl)imidazole-4-carboxamide (10-formyl THF route): step 1/1. The protein operates within purine metabolism; IMP biosynthesis via de novo pathway; IMP from 5-formamido-1-(5-phospho-D-ribosyl)imidazole-4-carboxamide: step 1/1. This Neisseria meningitidis serogroup B (strain ATCC BAA-335 / MC58) protein is Bifunctional purine biosynthesis protein PurH.